The following is a 220-amino-acid chain: CASP-like protein 1E1 (220 aa).

Residues 1 to 57 (METPTPRVKPGFNGVGVGMGSSVNGSSRRAGYYMGPAGAVAVAGGGRAAAAAPVDGC) are Cytoplasmic-facing. The chain crosses the membrane as a helical span at residues 58 to 78 (SVALRVFVLAATLVSAVVMGV). Residues 79-108 (DRQTSTIRITVTDALPPLEVPLTANWSYSS) lie on the Extracellular side of the membrane. An N-linked (GlcNAc...) asparagine glycan is attached at N103. Residues 109-129 (AFVYFVVANAMVCLFSAAALA) traverse the membrane as a helical segment. Over 130–144 (ACRSRAAMVPVMVGD) the chain is Cytoplasmic. Residues 145–165 (LLALALLYSAVGAAAEFGILG) traverse the membrane as a helical segment. At 166-187 (ERGNSHVRWPKVCNVYGRFCER) the chain is on the extracellular side. Residues 188 to 208 (AMAAVIVSLIAAFANLVLLML) form a helical membrane-spanning segment. Residues 209-220 (NILTIHKSSSYY) lie on the Cytoplasmic side of the membrane.

Belongs to the Casparian strip membrane proteins (CASP) family. In terms of assembly, homodimer and heterodimers.

It localises to the cell membrane. The protein is CASP-like protein 1E1 of Zea mays (Maize).